Consider the following 595-residue polypeptide: Proline--tRNA ligase (595 aa).

Positions 1 to 22 (MKMSTMFGATLHTAPGRSESEG) are disordered.

The protein belongs to the class-II aminoacyl-tRNA synthetase family. ProS type 1 subfamily. As to quaternary structure, homodimer.

It localises to the cytoplasm. The catalysed reaction is tRNA(Pro) + L-proline + ATP = L-prolyl-tRNA(Pro) + AMP + diphosphate. Its function is as follows. Catalyzes the attachment of proline to tRNA(Pro) in a two-step reaction: proline is first activated by ATP to form Pro-AMP and then transferred to the acceptor end of tRNA(Pro). As ProRS can inadvertently accommodate and process non-cognate amino acids such as alanine and cysteine, to avoid such errors it has two additional distinct editing activities against alanine. One activity is designated as 'pretransfer' editing and involves the tRNA(Pro)-independent hydrolysis of activated Ala-AMP. The other activity is designated 'posttransfer' editing and involves deacylation of mischarged Ala-tRNA(Pro). The misacylated Cys-tRNA(Pro) is not edited by ProRS. This is Proline--tRNA ligase from Salinispora tropica (strain ATCC BAA-916 / DSM 44818 / JCM 13857 / NBRC 105044 / CNB-440).